Reading from the N-terminus, the 430-residue chain is Adenylosuccinate synthetase (430 aa).

Residues 12-18 and 40-42 contribute to the GTP site; these read GDEGKGK and GHT. Catalysis depends on Asp-13, which acts as the Proton acceptor. Mg(2+) is bound by residues Asp-13 and Gly-40. IMP contacts are provided by residues 13–16, 38–41, Thr-130, Arg-144, Gln-224, Thr-239, and Arg-303; these read DEGK and NAGH. His-41 serves as the catalytic Proton donor. 299-305 lines the substrate pocket; it reads TVTGRKR. Residues Arg-305, 331–333, and 413–415 each bind GTP; these read KLD and STS.

It belongs to the adenylosuccinate synthetase family. Homodimer. Mg(2+) serves as cofactor.

Its subcellular location is the cytoplasm. The enzyme catalyses IMP + L-aspartate + GTP = N(6)-(1,2-dicarboxyethyl)-AMP + GDP + phosphate + 2 H(+). It participates in purine metabolism; AMP biosynthesis via de novo pathway; AMP from IMP: step 1/2. In terms of biological role, plays an important role in the de novo pathway of purine nucleotide biosynthesis. Catalyzes the first committed step in the biosynthesis of AMP from IMP. The chain is Adenylosuccinate synthetase from Cereibacter sphaeroides (strain ATCC 17023 / DSM 158 / JCM 6121 / CCUG 31486 / LMG 2827 / NBRC 12203 / NCIMB 8253 / ATH 2.4.1.) (Rhodobacter sphaeroides).